Reading from the N-terminus, the 650-residue chain is Acetyl-coenzyme A synthetase (650 aa).

CoA contacts are provided by residues 191-194, Thr-311, and Asn-335; that span reads RGGR. ATP contacts are provided by residues 387–389, 411–416, Asp-500, and Arg-515; these read GEP and DTWWQT. Ser-523 provides a ligand contact to CoA. Residue Arg-526 coordinates ATP. Mg(2+) contacts are provided by Val-537, His-539, and Val-542. Arg-584 serves as a coordination point for CoA. Lys-609 carries the post-translational modification N6-acetyllysine.

Belongs to the ATP-dependent AMP-binding enzyme family. Requires Mg(2+) as cofactor. Post-translationally, acetylated. Deacetylation by the SIR2-homolog deacetylase activates the enzyme.

It carries out the reaction acetate + ATP + CoA = acetyl-CoA + AMP + diphosphate. Its function is as follows. Catalyzes the conversion of acetate into acetyl-CoA (AcCoA), an essential intermediate at the junction of anabolic and catabolic pathways. AcsA undergoes a two-step reaction. In the first half reaction, AcsA combines acetate with ATP to form acetyl-adenylate (AcAMP) intermediate. In the second half reaction, it can then transfer the acetyl group from AcAMP to the sulfhydryl group of CoA, forming the product AcCoA. The sequence is that of Acetyl-coenzyme A synthetase from Shewanella baltica (strain OS195).